Here is a 258-residue protein sequence, read N- to C-terminus: Type III pantothenate kinase (258 aa).

6–13 (DVGNTNTV) is a binding site for ATP. Substrate-binding positions include tyrosine 100 and 107–110 (GADR). Aspartate 109 acts as the Proton acceptor in catalysis. Residue aspartate 129 participates in K(+) binding. Threonine 132 serves as a coordination point for ATP. Threonine 184 serves as a coordination point for substrate.

It belongs to the type III pantothenate kinase family. In terms of assembly, homodimer. NH4(+) is required as a cofactor. It depends on K(+) as a cofactor.

The protein resides in the cytoplasm. It carries out the reaction (R)-pantothenate + ATP = (R)-4'-phosphopantothenate + ADP + H(+). Its pathway is cofactor biosynthesis; coenzyme A biosynthesis; CoA from (R)-pantothenate: step 1/5. Catalyzes the phosphorylation of pantothenate (Pan), the first step in CoA biosynthesis. This chain is Type III pantothenate kinase, found in Geobacillus thermodenitrificans (strain NG80-2).